We begin with the raw amino-acid sequence, 233 residues long: Probable 2-phosphosulfolactate phosphatase (233 aa).

This sequence belongs to the ComB family. Requires Mg(2+) as cofactor.

It catalyses the reaction (2R)-O-phospho-3-sulfolactate + H2O = (2R)-3-sulfolactate + phosphate. In Clostridium tetani (strain Massachusetts / E88), this protein is Probable 2-phosphosulfolactate phosphatase.